The sequence spans 768 residues: Cullin-3-B (768 aa).

The disordered stretch occupies residues 677-698 (VAAKQGESDPERKETRQKVDDD). Over residues 682-698 (GESDPERKETRQKVDDD) the composition is skewed to basic and acidic residues. The Cullin neddylation domain occupies 698–760 (DRKHEIEAAI…REYLARTPED (63 aa)). A Glycyl lysine isopeptide (Lys-Gly) (interchain with G-Cter in NEDD8) cross-link involves residue lysine 712.

The protein belongs to the cullin family. In terms of assembly, component of multiple BCR (BTB-CUL3-RBX1) E3 ubiquitin-protein ligase complexes formed of cul3, rbx1 and a variable BTB domain-containing protein acting as both, adapter to cullin and substrate recognition subunit. Interacts with btbd6. Neddylated. Attachment of NEDD8 is required for the E3 ubiquitin-protein ligase activity of the SCF-like complex.

The protein localises to the nucleus. It participates in protein modification; protein ubiquitination. Probable core component of cullin-based SCF-like E3 ubiquitin-protein ligase complexes which mediate the ubiquitination and subsequent proteasomal degradation of target proteins. The E3 ubiquitin-protein ligase activity of the complex is dependent on the neddylation of the cullin subunit. Involved in ER-Golgi transport by regulating the size of COPII coats, thereby playing a key role in collagen export, which is required for embryonic stem (ES) cells division. May play a role in the regulation of mittotic entry via ubiquitination of aurka. This is Cullin-3-B (cul3b) from Xenopus laevis (African clawed frog).